A 446-amino-acid polypeptide reads, in one-letter code: MSGSRSALSVVRLAACAKPCTLGSTSSVLTRPFSHSAQLCSPAKPSIKAIGELRKLVPGTSMLKAKEALLASRPASSPDTDSIALALEWLEADRKKSGAKKADKVASRTAREGVVAVSILSDGLPSSIEMQGELKDEAKRAGIGATSAAAGAIVEINCETDFVAKNEVFAQLVKDVVHTVALFPGLSAQSGAKRGLVEVPVDQLLAFPLLPSSREATGTSVSAKTVGSAIIDVVSRLGEKISIARAAAIVAPSVPSPDATRRSESGTARGGSIVELASAFAHGGSAGFAAAKDVSNPGYVLTSGKVASLVMTRFASDKLPDALQAGSIQSNIRALTRSLARQVAGLETNCIDSAATCPVDGQVSSALYKQPFMMLLPAAAPSLESNAQPVRQVLSTWASHNNLDSNGNNVVEVVDMHRWELGETIAPPDDAGPGFADEVRKAAGLA.

The N-terminal 33 residues, 1 to 33 (MSGSRSALSVVRLAACAKPCTLGSTSSVLTRPF), are a transit peptide targeting the mitochondrion.

Belongs to the EF-Ts family.

Its subcellular location is the mitochondrion. Its function is as follows. Associates with the EF-Tu.GDP complex and induces the exchange of GDP to GTP. It remains bound to the aminoacyl-tRNA.EF-Tu.GTP complex up to the GTP hydrolysis stage on the ribosome. The polypeptide is Elongation factor Ts, mitochondrial (Mycosarcoma maydis (Corn smut fungus)).